The chain runs to 196 residues: Agamous-like MADS-box protein AGL31 (196 aa).

The MADS-box domain occupies 1-61; it reads MGRKKVEIKR…GKLYKSASGD (61 aa). Positions 80–170 constitute a K-box domain; it reads ALDLAEKTRN…ASQVGKKTFL (91 aa).

In terms of tissue distribution, expressed in most plant tissues, roots, seedlings, leaves, stems, inflorescences, pollen, siliques and flowers.

The protein resides in the nucleus. Its function is as follows. Probable transcription factor that prevents vernalization by short periods of cold. Acts as a floral repressor. This Arabidopsis thaliana (Mouse-ear cress) protein is Agamous-like MADS-box protein AGL31 (AGL31).